Reading from the N-terminus, the 316-residue chain is Cyclin-dependent kinase inhibitor 1C (316 aa).

R107 carries the omega-N-methylarginine modification. The tract at residues 124–153 (ESLDGLEEAPEQLPSVPVPAPASTPPPVPV) is disordered. Over residues 139 to 153 (VPVPAPASTPPPVPV) the composition is skewed to pro residues. 9 consecutive repeat copies span residues 156 to 159 (PAPA), 160 to 163 (PAPA), 180 to 183 (PAPA), 184 to 187 (PAPA), 188 to 191 (PAPA), 198 to 201 (PAPA), 202 to 205 (PAPA), 206 to 209 (PAPA), and 210 to 213 (PAPA). The interval 156–213 (PAPAPAPAPVAAPVAAPVAVAVLAPAPAPAPAPAPAPAPVAAPAPAPAPAPAPAPAPA) is 9 X 4 AA repeats of P-A-P-A. Residues 181–217 (APAPAPAPAPAPAPVAAPAPAPAPAPAPAPAPAPAPD) are compositionally biased toward pro residues. Residues 181–260 (APAPAPAPAP…AAGTAAASAN (80 aa)) are disordered. Polar residues predominate over residues 223–233 (SAEQGANQGQR). The span at 251–260 (AAGTAAASAN) shows a compositional bias: low complexity. A Phosphoserine modification is found at S268. The Nuclear localization signal signature appears at 278–281 (KRKR). The segment at 278–316 (KRKRSAPEKSSGDVPAPCPSPSAAPGVGSVEQTPRKRLR) is disordered.

The protein belongs to the CDI family. As to quaternary structure, interacts with PCNA. Expressed in the heart, brain, lung, skeletal muscle, kidney, pancreas and testis. Expressed in the eye. High levels are seen in the placenta while low levels are seen in the liver.

It is found in the nucleus. Functionally, potent tight-binding inhibitor of several G1 cyclin/CDK complexes (cyclin E-CDK2, cyclin D2-CDK4, and cyclin A-CDK2) and, to lesser extent, of the mitotic cyclin B-CDC2. Negative regulator of cell proliferation. May play a role in maintenance of the non-proliferative state throughout life. The polypeptide is Cyclin-dependent kinase inhibitor 1C (CDKN1C) (Homo sapiens (Human)).